A 242-amino-acid polypeptide reads, in one-letter code: MSFLIVANWKMNGMRSSFVDFIGKLNNKSNEITSKLVICPPFTSFPSSIELNNNIDIGAQNCHHKKFGSYTGEISAEMLKELGCTYVMLGHSERANEKDSEIKLKSEIAIESGLHPIICVGENSEDYKNEKTKEVIEYQCKNRLPTHGEYTVAYEPIWAIGTGHVPNNDAIAKVIEVIKLCTSKKHIIYGGSVSSENIENLLSISNLSGVLIGSASLDFDHFYKIIQQVEKKFSLINSKISN.

Substrate is bound at residue 8-10 (NWK). The active-site Electrophile is histidine 91. The active-site Proton acceptor is glutamate 155. The substrate site is built by glycine 161 and serine 192.

This sequence belongs to the triosephosphate isomerase family. As to quaternary structure, homodimer.

It localises to the cytoplasm. It carries out the reaction D-glyceraldehyde 3-phosphate = dihydroxyacetone phosphate. Its pathway is carbohydrate biosynthesis; gluconeogenesis. It functions in the pathway carbohydrate degradation; glycolysis; D-glyceraldehyde 3-phosphate from glycerone phosphate: step 1/1. Involved in the gluconeogenesis. Catalyzes stereospecifically the conversion of dihydroxyacetone phosphate (DHAP) to D-glyceraldehyde-3-phosphate (G3P). In Wolbachia pipientis wMel, this protein is Triosephosphate isomerase.